The primary structure comprises 605 residues: Glycerophosphodiester phosphodiesterase domain-containing protein 5 (605 aa).

Residues 1–42 (MVRHQPLQYYEPQLCLSCLTGIYGCRWKRYQRSHDDTTPWER) lie on the Cytoplasmic side of the membrane. 2 disulfides stabilise this stretch: C15-C18 and C25-C571. The helical transmembrane segment at 43–63 (LWFLLLTFTFGLTLTWLYFWW) threads the bilayer. Over 64 to 89 (EVHNDYDEFNWYLYNRMGYWSDWPVP) the chain is Extracellular. The chain crosses the membrane as a helical span at residues 90–110 (ILVTTAAAFAYIAGLLVLALC). The Cytoplasmic segment spans residues 111-125 (HIAVGQQMNLHWLHK). Residues 126–146 (IGLVVILASTVVAMSAVAQLW) form a helical membrane-spanning segment. At 147-160 (EDEWEVLLISLQGT) the chain is on the extracellular side. The chain crosses the membrane as a helical span at residues 161-181 (APFLHVGAVAAVTMLSWIVAG). At 182 to 192 (QFARAERTSSQ) the chain is on the cytoplasmic side. A helical membrane pass occupies residues 193–213 (VTILCTFFTVVFALYLAPLTI). Residues 214–496 (SSPCIMEKKD…PLWIMPPDEY (283 aa)) lie on the Extracellular side of the membrane. The 258-residue stretch at 228–485 (PALIGHRGAP…DNSHALSQVP (258 aa)) folds into the GP-PDE domain. N301, N336, N352, N374, and N448 each carry an N-linked (GlcNAc...) asparagine glycan. The chain crosses the membrane as a helical span at residues 497–517 (CLMWVTADLVSFTLIVGIFVL). The Cytoplasmic segment spans residues 518–605 (QKWRLGGIRS…TKTLIERSGR (88 aa)). The tract at residues 582-605 (STATPVGPRGGGSHTKTLIERSGR) is disordered.

It belongs to the glycerophosphoryl diester phosphodiesterase family. As to quaternary structure, interacts with PRDX1; forms a mixed-disulfide with PRDX1, leading to disrupt intramolecular disulfide bond between Cys-25 and Cys-571. In terms of processing, intramolecular disulfide bond between Cys-25 and Cys-571 is reduced by PRDX1.

Its subcellular location is the endomembrane system. The protein localises to the cytoplasm. It is found in the perinuclear region. The protein resides in the cell projection. It localises to the growth cone. It carries out the reaction a 1,2-diacyl-sn-glycero-3-phospho-(1D-myo-inositol-4,5-bisphosphate) + H2O = 1D-myo-inositol 1,4,5-trisphosphate + a 1,2-diacyl-sn-glycerol + H(+). The enzyme catalyses sn-glycerol 3-phosphocholine + H2O = sn-glycerol 3-phosphate + choline + H(+). In terms of biological role, glycerophosphodiester phosphodiesterase that promotes neurite formation and drives spinal motor neuron differentiation. Mediates the cleavage of glycosylphosphatidylinositol (GPI) anchor of target proteins: removes the GPI-anchor of RECK, leading to release RECK from the plasma membrane. May contribute to the osmotic regulation of cellular glycerophosphocholine. This is Glycerophosphodiester phosphodiesterase domain-containing protein 5 from Homo sapiens (Human).